The chain runs to 419 residues: Histidine--tRNA ligase (419 aa).

The protein belongs to the class-II aminoacyl-tRNA synthetase family. Homodimer.

The protein resides in the cytoplasm. The enzyme catalyses tRNA(His) + L-histidine + ATP = L-histidyl-tRNA(His) + AMP + diphosphate + H(+). The protein is Histidine--tRNA ligase of Halothermothrix orenii (strain H 168 / OCM 544 / DSM 9562).